The following is a 356-amino-acid chain: MTAPVRIALDAMGGDHGPETVLAGAEISLWRHPDTSFVLYGDEARVTEVLKSHPKLAAVSRIVHTDVVVGMDDKPSQALRRGRYKSSMWRAIDAVKLKEADVAVSAGNTGALMAMANFNLRTMPGISRPAIAAIWPTLRGESVVLDVGASIGATAKSLVEMAIMGSAMARVLFDLEAPTVGLLNVGVEEIKGVEEVKEAARILREENLDVNYRGFVEGNDIGAGTVDVVVTEGFSGNIALKTAEGTAKQLGSYLRAAMGRTWRARIGYLLARDAFRVLREKMDPRRANGGVFLGLNGIVIKSHGGTDAEGFAAAVDLAYDMVRNELLARIEKSLVGRQPPDVAACRPQAAGVEGQS.

This sequence belongs to the PlsX family. Homodimer. Probably interacts with PlsY.

The protein localises to the cytoplasm. It carries out the reaction a fatty acyl-[ACP] + phosphate = an acyl phosphate + holo-[ACP]. It participates in lipid metabolism; phospholipid metabolism. Its function is as follows. Catalyzes the reversible formation of acyl-phosphate (acyl-PO(4)) from acyl-[acyl-carrier-protein] (acyl-ACP). This enzyme utilizes acyl-ACP as fatty acyl donor, but not acyl-CoA. The polypeptide is Phosphate acyltransferase (Xanthobacter autotrophicus (strain ATCC BAA-1158 / Py2)).